A 918-amino-acid polypeptide reads, in one-letter code: Chitin synthase C (918 aa).

The segment at 1–63 is disordered; that stretch reads MSYNRLGDPY…EMPSSDRLAE (63 aa). Residues 22–37 are compositionally biased toward low complexity; the sequence is NPSSLSNRSPSPGRPL. The next 4 membrane-spanning stretches (helical) occupy residues 562–581, 605–625, 637–657, and 672–692; these read WLNGSFFAAVYAITHFYQLW, LFAWFGIGNFFLVFHILTTYL, VLGVVFEWLYLATLVTCFVLS, and MVYLWVFIMIYLAFAAVFVTV. A glycan (N-linked (GlcNAc...) asparagine) is linked at Asn-712. Helical transmembrane passes span 715–735, 845–865, and 890–910; these read FFSIIVSLGSTYVMWFIASII, VVLVWVFCNFALGAVVLSSAG, and VVLWSVAGLSIFKFLGAMWFL.

The protein belongs to the chitin synthase family. Class I subfamily. In terms of tissue distribution, mainly expressed in hyphae and conidiphores. Relatively strongly expressed in young cleistothecia and in mature ascospores, but negligible in Huelle cells.

It localises to the cell membrane. It is found in the cell septum. The protein localises to the cell tip. The catalysed reaction is [(1-&gt;4)-N-acetyl-beta-D-glucosaminyl](n) + UDP-N-acetyl-alpha-D-glucosamine = [(1-&gt;4)-N-acetyl-beta-D-glucosaminyl](n+1) + UDP + H(+). Functionally, polymerizes chitin, a structural polymer of the cell wall and septum, by transferring the sugar moiety of UDP-GlcNAc to the non-reducing end of the growing chitin polymer. ChsC and chsA share critical functions in hyphal wall integrity and differentiation. ChsA and chsC share also overlapping roles in septum formation. The sequence is that of Chitin synthase C from Emericella nidulans (strain FGSC A4 / ATCC 38163 / CBS 112.46 / NRRL 194 / M139) (Aspergillus nidulans).